Consider the following 93-residue polypeptide: MADITDIKSIMYTEKSLQIQESGVLVVQTSPKVSKNQLKEVFKEYFGFTPVRVNSLRQAGKIKRFRGVEGKRASFKKFYVKLPEGAKIESLAV.

It belongs to the universal ribosomal protein uL23 family. In terms of assembly, part of the 50S ribosomal subunit. Contacts protein L29, and trigger factor when it is bound to the ribosome.

Functionally, one of the early assembly proteins it binds 23S rRNA. One of the proteins that surrounds the polypeptide exit tunnel on the outside of the ribosome. Forms the main docking site for trigger factor binding to the ribosome. In Wolinella succinogenes (strain ATCC 29543 / DSM 1740 / CCUG 13145 / JCM 31913 / LMG 7466 / NCTC 11488 / FDC 602W) (Vibrio succinogenes), this protein is Large ribosomal subunit protein uL23.